The primary structure comprises 457 residues: MNAKDVISRLPDEVLGRILSLISTKEAVSTSVLSKRWKNMFVLVSNLDIDDRQSVPKTKQNRIEIHRNYMAFVDKLLDTQRGSSIKKLTLKSHVGVRGGTDSSRIQSWICNVLDHGVMDLDVFITLKGKSPPVPAMIFKSKTLVKLRVGRGFTIKLSQDVSLPLLRTLCLDSVNFVGGHNVVGTLISRCPVLEELVVEERRCVDWTCSVSSPSLKRLHIRFDRKFTSISLDAPNLIYYKHSGYVLGKYPNVKLDSLIEARLNLRMDETRMVGVRNGSLGSIPADMRNLINGIRNVRILHLSSHTLELLYFSCKEMPLFDSLVSLSIGNDKARGWQMLPLLIKNSPNLETLIFMGLDHYITNRCGDVCVCYDTDESITSCLSSSQVKVLEILSYQGTTRELNQMKHFLEKLPCLELVKICVVNNSNNLQTTMEMRNLMMLPRASSKCKIQVKVLTKNN.

The region spanning 4–50 (KDVISRLPDEVLGRILSLISTKEAVSTSVLSKRWKNMFVLVSNLDID) is the F-box domain. LRR repeat units follow at residues 265-288 (MDET…MRNL), 292-315 (IRNV…CKEM), and 318-343 (FDSL…LIKN).

This is F-box/LRR-repeat protein At2g42730 from Arabidopsis thaliana (Mouse-ear cress).